The chain runs to 77 residues: Small ribosomal subunit protein uS17 (77 aa).

Belongs to the universal ribosomal protein uS17 family. Part of the 30S ribosomal subunit.

One of the primary rRNA binding proteins, it binds specifically to the 5'-end of 16S ribosomal RNA. In Rickettsia prowazekii (strain Madrid E), this protein is Small ribosomal subunit protein uS17.